The following is a 225-amino-acid chain: Putative tyrosine-protein phosphatase OCA1 (225 aa).

Residues 1–11 (MTDNCREDDDN) show a composition bias toward acidic residues. Residues 1–24 (MTDNCREDDDNLGTSGDNALSAPT) are disordered. Residues 12–24 (LGTSGDNALSAPT) are compositionally biased toward polar residues. Residues 42 to 196 (NFCPVERYLY…FDTKSVTIDK (155 aa)) enclose the Tyrosine-protein phosphatase domain. The Phosphocysteine intermediate role is filled by cysteine 138.

It belongs to the protein-tyrosine phosphatase family.

Its subcellular location is the cytoplasm. The catalysed reaction is O-phospho-L-tyrosyl-[protein] + H2O = L-tyrosyl-[protein] + phosphate. In terms of biological role, putative tyrosine-protein phosphatase required for protection against superoxide stress. In Eremothecium gossypii (strain ATCC 10895 / CBS 109.51 / FGSC 9923 / NRRL Y-1056) (Yeast), this protein is Putative tyrosine-protein phosphatase OCA1 (OCA1).